Reading from the N-terminus, the 392-residue chain is GTPase Obg (392 aa).

The 159-residue stretch at 1-159 folds into the Obg domain; that stretch reads MKFVDEATIL…RDLQLELMLL (159 aa). Residues 127-148 are disordered; that stretch reads NTRFKSSVNRTPRQKTMGTPGD. Polar residues predominate over residues 129-143; that stretch reads RFKSSVNRTPRQKTM. Positions 160–333 constitute an OBG-type G domain; the sequence is ADVGMLGMPN…LCWDVMTFII (174 aa). GTP contacts are provided by residues 166 to 173, 191 to 195, 213 to 216, 283 to 286, and 314 to 316; these read GMPNAGKS, FTTLV, DIPG, NKID, and SAA. 2 residues coordinate Mg(2+): S173 and T193. Acidic residues predominate over residues 362 to 386; sequence EEAEAEAEDDEDWDDDWDEDDEEGV. A disordered region spans residues 362–392; that stretch reads EEAEAEAEDDEDWDDDWDEDDEEGVEFIYKR.

This sequence belongs to the TRAFAC class OBG-HflX-like GTPase superfamily. OBG GTPase family. As to quaternary structure, monomer. The cofactor is Mg(2+).

The protein resides in the cytoplasm. In terms of biological role, an essential GTPase which binds GTP, GDP and possibly (p)ppGpp with moderate affinity, with high nucleotide exchange rates and a fairly low GTP hydrolysis rate. Plays a role in control of the cell cycle, stress response, ribosome biogenesis and in those bacteria that undergo differentiation, in morphogenesis control. This is GTPase Obg from Klebsiella pneumoniae subsp. pneumoniae (strain ATCC 700721 / MGH 78578).